The primary structure comprises 189 residues: Elongation factor P (189 aa).

The protein belongs to the elongation factor P family.

The protein localises to the cytoplasm. Its pathway is protein biosynthesis; polypeptide chain elongation. In terms of biological role, involved in peptide bond synthesis. Stimulates efficient translation and peptide-bond synthesis on native or reconstituted 70S ribosomes in vitro. Probably functions indirectly by altering the affinity of the ribosome for aminoacyl-tRNA, thus increasing their reactivity as acceptors for peptidyl transferase. This Pseudomonas putida (strain ATCC 700007 / DSM 6899 / JCM 31910 / BCRC 17059 / LMG 24140 / F1) protein is Elongation factor P.